The chain runs to 189 residues: Peptidyl-tRNA hydrolase (189 aa).

Residue Y15 coordinates tRNA. The Proton acceptor role is filled by H20. F66, N68, and N114 together coordinate tRNA.

It belongs to the PTH family. In terms of assembly, monomer.

It is found in the cytoplasm. It catalyses the reaction an N-acyl-L-alpha-aminoacyl-tRNA + H2O = an N-acyl-L-amino acid + a tRNA + H(+). Its function is as follows. Hydrolyzes ribosome-free peptidyl-tRNAs (with 1 or more amino acids incorporated), which drop off the ribosome during protein synthesis, or as a result of ribosome stalling. In terms of biological role, catalyzes the release of premature peptidyl moieties from peptidyl-tRNA molecules trapped in stalled 50S ribosomal subunits, and thus maintains levels of free tRNAs and 50S ribosomes. The chain is Peptidyl-tRNA hydrolase from Streptococcus pyogenes serotype M6 (strain ATCC BAA-946 / MGAS10394).